A 339-amino-acid polypeptide reads, in one-letter code: MVLGVVGISYREAALKERERAIQYLQSFEKNLFLAQRFLGKGGAFIPLLTCHRAELYYYSESPEIAQAALLSELTSQGIRPYRHRGLSCFTHLFQVTSGIDSLIFGETEIQGQVKRAYLKGSKERELPFDLHFLFQKALKEGKEYRSRIGFPDHQVTIESVVQEILLSYDKSIYTNFLFVGYSDINRKVAAYLYQHGYHRITFCSRQQVTAPYRTLSRETLSFRQPYDVIFFGSSESASQFSDLSCESLASIPKRIVFDFNVPRTFLWKETPTGFVYLDIDFISECVQKRLQCTKEGVNKAKLLLTCAAKKQWEIYEKKSSHITQRQISSPRIPSVLSY.

Residues 50-53 (TCHR), Ser-102, 107-109 (ETE), and Gln-113 contribute to the substrate site. Cys-51 (nucleophile) is an active-site residue. 181-186 (GYSDIN) serves as a coordination point for NADP(+).

It belongs to the glutamyl-tRNA reductase family. Homodimer.

The catalysed reaction is (S)-4-amino-5-oxopentanoate + tRNA(Glu) + NADP(+) = L-glutamyl-tRNA(Glu) + NADPH + H(+). Its pathway is porphyrin-containing compound metabolism; protoporphyrin-IX biosynthesis; 5-aminolevulinate from L-glutamyl-tRNA(Glu): step 1/2. Catalyzes the NADPH-dependent reduction of glutamyl-tRNA(Glu) to glutamate 1-semialdehyde (GSA). The sequence is that of Glutamyl-tRNA reductase from Chlamydia pneumoniae (Chlamydophila pneumoniae).